Here is a 50-residue protein sequence, read N- to C-terminus: Major pollen allergen Ole e 6 (50 aa).

Intrachain disulfides connect cysteine 8/cysteine 34, cysteine 12/cysteine 30, and cysteine 16/cysteine 26.

As to expression, expressed in pollen.

In Olea europaea (Common olive), this protein is Major pollen allergen Ole e 6 (OLE6).